Reading from the N-terminus, the 372-residue chain is Aminomethyltransferase (372 aa).

Belongs to the GcvT family. In terms of assembly, the glycine cleavage system is composed of four proteins: P, T, L and H.

The catalysed reaction is N(6)-[(R)-S(8)-aminomethyldihydrolipoyl]-L-lysyl-[protein] + (6S)-5,6,7,8-tetrahydrofolate = N(6)-[(R)-dihydrolipoyl]-L-lysyl-[protein] + (6R)-5,10-methylene-5,6,7,8-tetrahydrofolate + NH4(+). Functionally, the glycine cleavage system catalyzes the degradation of glycine. This chain is Aminomethyltransferase, found in Paraburkholderia phymatum (strain DSM 17167 / CIP 108236 / LMG 21445 / STM815) (Burkholderia phymatum).